A 155-amino-acid polypeptide reads, in one-letter code: Protein-export protein SecB (155 aa).

This sequence belongs to the SecB family. As to quaternary structure, homotetramer, a dimer of dimers. One homotetramer interacts with 1 SecA dimer.

It is found in the cytoplasm. Functionally, one of the proteins required for the normal export of preproteins out of the cell cytoplasm. It is a molecular chaperone that binds to a subset of precursor proteins, maintaining them in a translocation-competent state. It also specifically binds to its receptor SecA. The protein is Protein-export protein SecB of Escherichia fergusonii (strain ATCC 35469 / DSM 13698 / CCUG 18766 / IAM 14443 / JCM 21226 / LMG 7866 / NBRC 102419 / NCTC 12128 / CDC 0568-73).